The sequence spans 330 residues: ADP-L-glycero-D-manno-heptose-6-epimerase (330 aa).

Residues 11-12 (FI), 32-33 (DN), Lys-39, Lys-54, 75-79 (EGACS), and Asn-92 each bind NADP(+). Tyr-139 serves as the catalytic Proton acceptor. Lys-143 contributes to the NADP(+) binding site. Substrate is bound at residue Asn-168. NADP(+)-binding residues include Val-169 and Lys-177. Lys-177 functions as the Proton acceptor in the catalytic mechanism. Substrate contacts are provided by residues Arg-179, His-186, 200 to 203 (FGEY), Arg-213, and Tyr-292.

This sequence belongs to the NAD(P)-dependent epimerase/dehydratase family. HldD subfamily. As to quaternary structure, homopentamer. NADP(+) serves as cofactor.

The catalysed reaction is ADP-D-glycero-beta-D-manno-heptose = ADP-L-glycero-beta-D-manno-heptose. It functions in the pathway nucleotide-sugar biosynthesis; ADP-L-glycero-beta-D-manno-heptose biosynthesis; ADP-L-glycero-beta-D-manno-heptose from D-glycero-beta-D-manno-heptose 7-phosphate: step 4/4. Functionally, catalyzes the interconversion between ADP-D-glycero-beta-D-manno-heptose and ADP-L-glycero-beta-D-manno-heptose via an epimerization at carbon 6 of the heptose. The chain is ADP-L-glycero-D-manno-heptose-6-epimerase from Burkholderia pseudomallei (strain K96243).